The following is a 286-amino-acid chain: Undecaprenyl-diphosphatase (286 aa).

The next 7 membrane-spanning stretches (helical) occupy residues 50-70 (PGVS…IAYF), 97-117 (LGIA…AIKL), 127-147 (LRSV…LALA), 165-185 (GLLV…RSGS), 200-220 (AARF…LVEL), 230-250 (GGVL…WLAI), and 262-282 (TWVF…WWAG).

This sequence belongs to the UppP family.

Its subcellular location is the cell inner membrane. It catalyses the reaction di-trans,octa-cis-undecaprenyl diphosphate + H2O = di-trans,octa-cis-undecaprenyl phosphate + phosphate + H(+). Catalyzes the dephosphorylation of undecaprenyl diphosphate (UPP). Confers resistance to bacitracin. This Synechococcus sp. (strain WH7803) protein is Undecaprenyl-diphosphatase.